A 383-amino-acid polypeptide reads, in one-letter code: Putative dehydratase subunit YjiM (383 aa).

It belongs to the FldB/FldC dehydratase alpha/beta subunit family.

This Escherichia coli (strain K12) protein is Putative dehydratase subunit YjiM (yjiM).